A 368-amino-acid chain; its full sequence is MRTEIENYVKKIEQSLELLWRSLDVEASTERLNALEELTADPSLWNDQANAQKLLREKSNLEEKLNAFNKLKSNLKDALELEEMAEAENDLETLSQIEQDLKNLSIIAAKFETECLFSGEADGNNCFLEINAGAGGTESHDWASIMMRMYLRFAERLGFKTEIINMINGEEAGIKSCTIRIIGKRAYGWFKTETGVHRLVRISPFNAAGKRMTSFASSWVYPEIDDNIAITIEDKDLRIDTFRASGAGGQHVNTTDSAVRITHIPTGTVTQCQSDRSQHKNKAQAMKMLQAKLYELEMQKRTDSVNEQNATKTDNSWGHQIRSYVLQPYHMVKDLRTDYETSDTKGVLDGDLEEFVSANLAMNVGGKK.

Position 250 is an N5-methylglutamine (Gln250).

The protein belongs to the prokaryotic/mitochondrial release factor family. Methylated by PrmC. Methylation increases the termination efficiency of RF2.

Its subcellular location is the cytoplasm. In terms of biological role, peptide chain release factor 2 directs the termination of translation in response to the peptide chain termination codons UGA and UAA. This chain is Peptide chain release factor 2, found in Rickettsia africae (strain ESF-5).